Consider the following 484-residue polypeptide: Glutathione reductase (484 aa).

2 residues coordinate FAD: Ser-32 and Gly-33. Ser-32 is a binding site for glutathione. Arg-39 contacts glutathione. 4 residues coordinate FAD: Glu-52, Thr-59, Cys-60, and Lys-68. Cys-60 and Cys-65 form a disulfide bridge. Tyr-122 contributes to the glutathione binding site. Ala-138 lines the FAD pocket. Ala-204, Ile-207, Glu-210, Arg-227, and Arg-233 together coordinate NADP(+). Thr-242 serves as a coordination point for glutathione. Gly-293 lines the NADP(+) pocket. Asp-333 is a binding site for FAD. Glu-339 serves as a coordination point for NADP(+). Thr-341 contributes to the FAD binding site. Arg-349 is a glutathione binding site. Val-374 is a binding site for NADP(+). Lys-426 is a glutathione binding site. His-473 lines the FAD pocket. His-473 functions as the Proton acceptor in the catalytic mechanism.

It belongs to the class-I pyridine nucleotide-disulfide oxidoreductase family. Homodimer. FAD serves as cofactor.

It is found in the cytoplasm. It localises to the mitochondrion. It carries out the reaction 2 glutathione + NADP(+) = glutathione disulfide + NADPH + H(+). Its function is as follows. Catalyzes the reduction of glutathione disulfide (GSSG) to reduced glutathione (GSH). Constitutes the major mechanism to maintain a high GSH:GSSG ratio in the cytosol. This chain is Glutathione reductase (GLR1), found in Kluyveromyces lactis (strain ATCC 8585 / CBS 2359 / DSM 70799 / NBRC 1267 / NRRL Y-1140 / WM37) (Yeast).